Here is a 243-residue protein sequence, read N- to C-terminus: Probable intron-encoded endonuclease aI3 (243 aa).

The protein belongs to the LAGLIDADG endonuclease family.

Its subcellular location is the mitochondrion. Mitochondrial DNA endonuclease involved in intron homing. The polypeptide is Probable intron-encoded endonuclease aI3 (aI3) (Dictyostelium citrinum (Slime mold)).